The sequence spans 252 residues: 2-succinyl-6-hydroxy-2,4-cyclohexadiene-1-carboxylate synthase (252 aa).

Belongs to the AB hydrolase superfamily. MenH family. As to quaternary structure, monomer.

It carries out the reaction 5-enolpyruvoyl-6-hydroxy-2-succinyl-cyclohex-3-ene-1-carboxylate = (1R,6R)-6-hydroxy-2-succinyl-cyclohexa-2,4-diene-1-carboxylate + pyruvate. Its pathway is quinol/quinone metabolism; 1,4-dihydroxy-2-naphthoate biosynthesis; 1,4-dihydroxy-2-naphthoate from chorismate: step 3/7. The protein operates within quinol/quinone metabolism; menaquinone biosynthesis. In terms of biological role, catalyzes a proton abstraction reaction that results in 2,5-elimination of pyruvate from 2-succinyl-5-enolpyruvyl-6-hydroxy-3-cyclohexene-1-carboxylate (SEPHCHC) and the formation of 2-succinyl-6-hydroxy-2,4-cyclohexadiene-1-carboxylate (SHCHC). In Shigella sonnei (strain Ss046), this protein is 2-succinyl-6-hydroxy-2,4-cyclohexadiene-1-carboxylate synthase.